A 514-amino-acid polypeptide reads, in one-letter code: Na(+)/H(+) antiporter NhaB (514 aa).

12 helical membrane-spanning segments follow: residues 23–43, 63–83, 97–117, 120–140, 144–164, 202–222, 238–258, 303–323, 357–377, 391–411, 447–467, and 475–495; these read LALL…PFIA, PLLP…TSAA, LLLM…LFIF, LLLS…AAAF, FLDA…FYGI, LMMH…VGEP, FFLR…LTCM, AVIG…VGLI, LTVF…APII, LFYL…VGTI, ATPN…APLI, and VWMA…CVEF.

This sequence belongs to the NhaB Na(+)/H(+) (TC 2.A.34) antiporter family.

It localises to the cell inner membrane. It catalyses the reaction 2 Na(+)(in) + 3 H(+)(out) = 2 Na(+)(out) + 3 H(+)(in). Its function is as follows. Na(+)/H(+) antiporter that extrudes sodium in exchange for external protons. In Salmonella gallinarum (strain 287/91 / NCTC 13346), this protein is Na(+)/H(+) antiporter NhaB.